Reading from the N-terminus, the 135-residue chain is Large ribosomal subunit protein uL16c (135 aa).

This sequence belongs to the universal ribosomal protein uL16 family. In terms of assembly, part of the 50S ribosomal subunit.

Its subcellular location is the plastid. The protein resides in the chloroplast. The sequence is that of Large ribosomal subunit protein uL16c from Gossypium barbadense (Sea Island cotton).